The following is an 80-amino-acid chain: Raniseptin-4 (80 aa).

The first 22 residues, 1 to 22 (MAFLKKSLFLVLFLGIVSLSIC), serve as a signal peptide directing secretion. Positions 23–49 (EEEKREGEEEEKQEEENEELSEEELRD) are excised as a propeptide.

It belongs to the frog skin active peptide (FSAP) family. Dermaseptin subfamily. Expressed by the skin glands.

It is found in the secreted. Has antibacterial activity. The chain is Raniseptin-4 from Boana raniceps (Chaco tree frog).